Here is a 625-residue protein sequence, read N- to C-terminus: BTB/POZ domain-containing protein At5g48130 (625 aa).

In terms of domain architecture, BTB spans 41–105; sequence ASVHVRVCNK…IYGCPTLIHP (65 aa). One can recognise an NPH3 domain in the interval 217–469; that stretch reads DTWIKDLTDL…VQALFIQQLN (253 aa). Positions 494–507 are enriched in polar residues; the sequence is VPSSRPLTSQQSPC. The disordered stretch occupies residues 494-513; it reads VPSSRPLTSQQSPCTDDETG.

The protein belongs to the NPH3 family.

It participates in protein modification; protein ubiquitination. Its function is as follows. May act as a substrate-specific adapter of an E3 ubiquitin-protein ligase complex (CUL3-RBX1-BTB) which mediates the ubiquitination and subsequent proteasomal degradation of target proteins. The polypeptide is BTB/POZ domain-containing protein At5g48130 (Arabidopsis thaliana (Mouse-ear cress)).